Here is a 326-residue protein sequence, read N- to C-terminus: Beta-ketoacyl-[acyl-carrier-protein] synthase III (326 aa).

Residues Cys-113 and His-253 contribute to the active site. Residues 254-258 are ACP-binding; that stretch reads QANIR. Residue Asn-283 is part of the active site.

Belongs to the thiolase-like superfamily. FabH family. Homodimer.

Its subcellular location is the cytoplasm. It carries out the reaction malonyl-[ACP] + acetyl-CoA + H(+) = 3-oxobutanoyl-[ACP] + CO2 + CoA. Its pathway is lipid metabolism; fatty acid biosynthesis. In terms of biological role, catalyzes the condensation reaction of fatty acid synthesis by the addition to an acyl acceptor of two carbons from malonyl-ACP. Catalyzes the first condensation reaction which initiates fatty acid synthesis and may therefore play a role in governing the total rate of fatty acid production. Possesses both acetoacetyl-ACP synthase and acetyl transacylase activities. Its substrate specificity determines the biosynthesis of branched-chain and/or straight-chain of fatty acids. The protein is Beta-ketoacyl-[acyl-carrier-protein] synthase III of Wolbachia sp. subsp. Brugia malayi (strain TRS).